The chain runs to 120 residues: Fumarate reductase subunit D (120 aa).

3 helical membrane-spanning segments follow: residues F25–I45, V55–P75, and I100–I120.

It belongs to the FrdD family. In terms of assembly, part of an enzyme complex containing four subunits: a flavoprotein (FrdA), an iron-sulfur protein (FrdB), and two hydrophobic anchor proteins (FrdC and FrdD).

The protein localises to the cell inner membrane. In terms of biological role, anchors the catalytic components of the fumarate reductase complex to the cell membrane, binds quinones. This chain is Fumarate reductase subunit D, found in Aliivibrio salmonicida (strain LFI1238) (Vibrio salmonicida (strain LFI1238)).